Reading from the N-terminus, the 414-residue chain is Tetraspanning orphan receptor (414 aa).

Residues M1–T28 are Cytoplasmic-facing. Residues I29 to M49 form a helical membrane-spanning segment. Residues T50–Y166 are Extracellular-facing. Residues I167 to I187 form a helical membrane-spanning segment. The Cytoplasmic portion of the chain corresponds to T188–L194. A helical membrane pass occupies residues L195–F215. Topologically, residues M216–A241 are extracellular. A helical transmembrane segment spans residues F242–V262. Residues W263–C414 lie on the Cytoplasmic side of the membrane. The disordered stretch occupies residues L306 to D328.

As to quaternary structure, interacts (via N-terminal extracellular domain) with human C2a. Post-translationally, phosphorylated on tyrosine residues.

It is found in the cell membrane. In terms of biological role, cell surface receptor that binds to human complement C2a protein. This results in inhibition of the classical and lectin pathways of complement activation, probably due to interference with binding of C2a to C4b and interference with cleavage by C1 or MASP2 such that C3 convertase cannot be formed. This infers resistance to complement-mediated cell lysis, allowing parasite survival and infection. The chain is Tetraspanning orphan receptor from Schistosoma japonicum (Blood fluke).